The following is a 439-amino-acid chain: MELGAAARAWSLLWLLLPLLGLVGASGPRTLVLLDNLNLRETHSLFFRSLKDRGFVLTFKTADDPSLSLIKYGEFLYDNLIVFSPSVEDFGGNINVETISTFIDGGGSVLVAASSDIGDPLRELGSECGIEFDEEKTAVIDHHNYDVSDLAQHTLIVADTENLLKAPTIVGKSSLNPILFRGVGMVADPDNPLVLDILTGSSTSYSFFPDKPITQYPHAVGKNTLLIAGLQARNNARVIFSGSLDFFSDAFFNSAVQKATPGSQRYPQTGNYELAVALSRWVFKEEGVLRVGPVSHHRVGEKAPPNAYTVTDLVEYSIVIEQLSEGRWVPFDGDDIQLEFVRIDPFVRTFLKRKGGKYSVQFKFPDVYGVFQFKVDYNRLGYTHLYSSTQVSVRPLQHTQYERFIPSAYPYYASAFSMMVGLFIFSVVFLHMKEKEKSD.

The N-terminal stretch at 1 to 25 is a signal peptide; sequence MELGAAARAWSLLWLLLPLLGLVGA. Topologically, residues 27–410 are lumenal; it reads GPRTLVLLDN…YERFIPSAYP (384 aa). A helical membrane pass occupies residues 411–430; the sequence is YYASAFSMMVGLFIFSVVFL. The Cytoplasmic segment spans residues 431–439; sequence HMKEKEKSD.

Belongs to the DDOST 48 kDa subunit family. Component of the oligosaccharyltransferase (OST) complex. OST exists in two different complex forms which contain common core subunits RPN1, RPN2, OST48, OST4, DAD1 and TMEM258, either STT3A or STT3B as catalytic subunits, and form-specific accessory subunits. STT3A complex assembly occurs through the formation of 3 subcomplexes. Subcomplex 1 contains RPN1 and TMEM258, subcomplex 2 contains the STT3A-specific subunits STT3A, DC2/OSTC, and KCP2 as well as the core subunit OST4, and subcomplex 3 contains RPN2, DAD1, and OST48. The STT3A complex can form stable complexes with the Sec61 complex or with both the Sec61 and TRAP complexes. Interacts with SMIM22.

It localises to the endoplasmic reticulum membrane. It functions in the pathway protein modification; protein glycosylation. Subunit of the oligosaccharyl transferase (OST) complex that catalyzes the initial transfer of a defined glycan (Glc(3)Man(9)GlcNAc(2) in eukaryotes) from the lipid carrier dolichol-pyrophosphate to an asparagine residue within an Asn-X-Ser/Thr consensus motif in nascent polypeptide chains, the first step in protein N-glycosylation. N-glycosylation occurs cotranslationally and the complex associates with the Sec61 complex at the channel-forming translocon complex that mediates protein translocation across the endoplasmic reticulum (ER). All subunits are required for a maximal enzyme activity. Required for the assembly of both SST3A- and SS3B-containing OST complexes. The chain is Dolichyl-diphosphooligosaccharide--protein glycosyltransferase 48 kDa subunit from Sus scrofa (Pig).